We begin with the raw amino-acid sequence, 188 residues long: Transcription antitermination protein NusB (188 aa).

The interval 154 to 188 is disordered; it reads RAANPGAVSGSDAPVAPWDDSEELPAEDEAEDSRP. Residues 172–188 are compositionally biased toward acidic residues; that stretch reads DDSEELPAEDEAEDSRP.

This sequence belongs to the NusB family.

Its function is as follows. Involved in transcription antitermination. Required for transcription of ribosomal RNA (rRNA) genes. Binds specifically to the boxA antiterminator sequence of the ribosomal RNA (rrn) operons. The protein is Transcription antitermination protein NusB of Corynebacterium efficiens (strain DSM 44549 / YS-314 / AJ 12310 / JCM 11189 / NBRC 100395).